The chain runs to 532 residues: CTP synthase (532 aa).

The segment at 1–267 (MTKYIFVTGG…DDIVLEHLQL (267 aa)) is amidoligase domain. Ser13 is a CTP binding site. Ser13 contributes to the UTP binding site. Position 14–19 (14–19 (SIGKGI)) interacts with ATP. An L-glutamine-binding site is contributed by Tyr54. Position 71 (Asp71) interacts with ATP. Asp71 and Glu141 together coordinate Mg(2+). Residues 148–150 (DIE), 188–193 (KTKPTQ), and Lys224 contribute to the CTP site. UTP is bound by residues 188-193 (KTKPTQ) and Lys224. The region spanning 292–532 (RIGLVGKYVS…DFVGAALNNK (241 aa)) is the Glutamine amidotransferase type-1 domain. Position 354 (Gly354) interacts with L-glutamine. Cys381 (nucleophile; for glutamine hydrolysis) is an active-site residue. Residues 382-385 (LGMQ), Glu405, and Arg462 each bind L-glutamine. Catalysis depends on residues His507 and Glu509.

This sequence belongs to the CTP synthase family. In terms of assembly, homotetramer.

The catalysed reaction is UTP + L-glutamine + ATP + H2O = CTP + L-glutamate + ADP + phosphate + 2 H(+). It carries out the reaction L-glutamine + H2O = L-glutamate + NH4(+). It catalyses the reaction UTP + NH4(+) + ATP = CTP + ADP + phosphate + 2 H(+). The protein operates within pyrimidine metabolism; CTP biosynthesis via de novo pathway; CTP from UDP: step 2/2. Its activity is regulated as follows. Allosterically activated by GTP, when glutamine is the substrate; GTP has no effect on the reaction when ammonia is the substrate. The allosteric effector GTP functions by stabilizing the protein conformation that binds the tetrahedral intermediate(s) formed during glutamine hydrolysis. Inhibited by the product CTP, via allosteric rather than competitive inhibition. Functionally, catalyzes the ATP-dependent amination of UTP to CTP with either L-glutamine or ammonia as the source of nitrogen. Regulates intracellular CTP levels through interactions with the four ribonucleotide triphosphates. The polypeptide is CTP synthase (Listeria innocua serovar 6a (strain ATCC BAA-680 / CLIP 11262)).